Reading from the N-terminus, the 140-residue chain is Methylglyoxal synthase (140 aa).

An MGS-like domain is found at 1 to 140 (MKIALIAHDR…HEGDRRPLAF (140 aa)). Residues His8, Lys12, 34–37 (TGTT), and 54–55 (SG) contribute to the substrate site. Asp60 (proton donor/acceptor) is an active-site residue. Substrate is bound at residue His87.

This sequence belongs to the methylglyoxal synthase family.

It catalyses the reaction dihydroxyacetone phosphate = methylglyoxal + phosphate. Functionally, catalyzes the formation of methylglyoxal from dihydroxyacetone phosphate. This is Methylglyoxal synthase from Enterococcus faecalis (strain ATCC 700802 / V583).